We begin with the raw amino-acid sequence, 338 residues long: Secretion system apparatus protein SsaL (338 aa).

The protein is Secretion system apparatus protein SsaL (ssaL) of Salmonella typhimurium (strain LT2 / SGSC1412 / ATCC 700720).